A 208-amino-acid polypeptide reads, in one-letter code: Thymidylate kinase (208 aa).

9-16 (GGEGCGKS) contributes to the ATP binding site.

The protein belongs to the thymidylate kinase family.

The catalysed reaction is dTMP + ATP = dTDP + ADP. Phosphorylation of dTMP to form dTDP in both de novo and salvage pathways of dTTP synthesis. This is Thymidylate kinase from Dehalococcoides mccartyi (strain ATCC BAA-2100 / JCM 16839 / KCTC 5957 / BAV1).